The primary structure comprises 443 residues: Chromosomal replication initiator protein DnaA (443 aa).

The segment at 1–75 is domain I, interacts with DnaA modulators; it reads MNTQLNEIWQ…AIKQVTFKEY (75 aa). The tract at residues 75–105 is domain II; the sequence is YEIAFIVPSQENLNKLTKQTESAGNEDSPLS. The tract at residues 106–321 is domain III, AAA+ region; that stretch reads VLNPKYTFDT…GALNRVIAYS (216 aa). 4 residues coordinate ATP: G150, G152, K153, and T154. The segment at 322 to 443 is domain IV, binds dsDNA; it reads SLTENEITVE…SEIKRNLLGK (122 aa).

The protein belongs to the DnaA family. In terms of assembly, oligomerizes as a right-handed, spiral filament on DNA at oriC.

It localises to the cytoplasm. In terms of biological role, plays an essential role in the initiation and regulation of chromosomal replication. ATP-DnaA binds to the origin of replication (oriC) to initiate formation of the DNA replication initiation complex once per cell cycle. Binds the DnaA box (a 9 base pair repeat at the origin) and separates the double-stranded (ds)DNA. Forms a right-handed helical filament on oriC DNA; dsDNA binds to the exterior of the filament while single-stranded (ss)DNA is stabiized in the filament's interior. The ATP-DnaA-oriC complex binds and stabilizes one strand of the AT-rich DNA unwinding element (DUE), permitting loading of DNA polymerase. After initiation quickly degrades to an ADP-DnaA complex that is not apt for DNA replication. Binds acidic phospholipids. This is Chromosomal replication initiator protein DnaA from Acetivibrio thermocellus (strain ATCC 27405 / DSM 1237 / JCM 9322 / NBRC 103400 / NCIMB 10682 / NRRL B-4536 / VPI 7372) (Clostridium thermocellum).